A 253-amino-acid polypeptide reads, in one-letter code: 5'/3'-nucleotidase SurE (253 aa).

A divalent metal cation contacts are provided by aspartate 8, aspartate 9, serine 39, and asparagine 92.

The protein belongs to the SurE nucleotidase family. The cofactor is a divalent metal cation.

The protein localises to the cytoplasm. It catalyses the reaction a ribonucleoside 5'-phosphate + H2O = a ribonucleoside + phosphate. The catalysed reaction is a ribonucleoside 3'-phosphate + H2O = a ribonucleoside + phosphate. It carries out the reaction [phosphate](n) + H2O = [phosphate](n-1) + phosphate + H(+). Functionally, nucleotidase with a broad substrate specificity as it can dephosphorylate various ribo- and deoxyribonucleoside 5'-monophosphates and ribonucleoside 3'-monophosphates with highest affinity to 3'-AMP. Also hydrolyzes polyphosphate (exopolyphosphatase activity) with the preference for short-chain-length substrates (P20-25). Might be involved in the regulation of dNTP and NTP pools, and in the turnover of 3'-mononucleotides produced by numerous intracellular RNases (T1, T2, and F) during the degradation of various RNAs. The chain is 5'/3'-nucleotidase SurE from Cronobacter sakazakii (strain ATCC BAA-894) (Enterobacter sakazakii).